The chain runs to 327 residues: Flotillin-like protein FloA (327 aa).

The helical transmembrane segment at 7-27 threads the bilayer; the sequence is FLVPILIVILLLVFFSLVPVG.

It belongs to the flotillin-like FloA family. As to quaternary structure, homooligomerizes.

It localises to the cell membrane. The protein localises to the membrane raft. In terms of biological role, found in functional membrane microdomains (FMM) that may be equivalent to eukaryotic membrane rafts. FMMs are highly dynamic and increase in number as cells age. Flotillins are thought to be important factors in membrane fluidity. The protein is Flotillin-like protein FloA of Finegoldia magna (strain ATCC 29328 / DSM 20472 / WAL 2508) (Peptostreptococcus magnus).